Reading from the N-terminus, the 468-residue chain is Adenylosuccinate synthetase (468 aa).

GTP-binding positions include 23 to 29 (GDEGKGK) and 51 to 53 (GHE). Residue Asp-24 is the Proton acceptor of the active site. Mg(2+) contacts are provided by Asp-24 and Gly-51. IMP contacts are provided by residues 24–27 (DEGK), 49–52 (NSGH), Thr-142, Arg-156, Asn-238, Thr-253, and Arg-317. The active-site Proton donor is the His-52. Residue 313–319 (VTTGRTR) participates in substrate binding. GTP-binding positions include Arg-319 and 345–347 (KLD).

This sequence belongs to the adenylosuccinate synthetase family. Homodimer. The cofactor is Mg(2+).

The protein resides in the cytoplasm. The enzyme catalyses IMP + L-aspartate + GTP = N(6)-(1,2-dicarboxyethyl)-AMP + GDP + phosphate + 2 H(+). Its pathway is purine metabolism; AMP biosynthesis via de novo pathway; AMP from IMP: step 1/2. Its function is as follows. Plays an important role in the salvage pathway for purine nucleotide biosynthesis. Catalyzes the first committed step in the biosynthesis of AMP from IMP. This Theileria annulata protein is Adenylosuccinate synthetase.